The chain runs to 485 residues: Protein nucleotidyltransferase YdiU (485 aa).

ATP-binding residues include Gly90, Gly92, Arg93, Lys113, Asp125, Gly126, Arg176, and Arg183. Asp252 acts as the Proton acceptor in catalysis. Positions 253 and 262 each coordinate Mg(2+). Residue Asp262 coordinates ATP.

This sequence belongs to the SELO family. Mg(2+) is required as a cofactor. It depends on Mn(2+) as a cofactor.

The catalysed reaction is L-seryl-[protein] + ATP = 3-O-(5'-adenylyl)-L-seryl-[protein] + diphosphate. The enzyme catalyses L-threonyl-[protein] + ATP = 3-O-(5'-adenylyl)-L-threonyl-[protein] + diphosphate. It catalyses the reaction L-tyrosyl-[protein] + ATP = O-(5'-adenylyl)-L-tyrosyl-[protein] + diphosphate. It carries out the reaction L-histidyl-[protein] + UTP = N(tele)-(5'-uridylyl)-L-histidyl-[protein] + diphosphate. The catalysed reaction is L-seryl-[protein] + UTP = O-(5'-uridylyl)-L-seryl-[protein] + diphosphate. The enzyme catalyses L-tyrosyl-[protein] + UTP = O-(5'-uridylyl)-L-tyrosyl-[protein] + diphosphate. Nucleotidyltransferase involved in the post-translational modification of proteins. It can catalyze the addition of adenosine monophosphate (AMP) or uridine monophosphate (UMP) to a protein, resulting in modifications known as AMPylation and UMPylation. The sequence is that of Protein nucleotidyltransferase YdiU from Aliivibrio fischeri (strain ATCC 700601 / ES114) (Vibrio fischeri).